Reading from the N-terminus, the 429-residue chain is MQVLIIGSGGREHALAWKVAQNPQVDTIYVAPGNAGTALEHKVQNVNIGITDIPALVAFAQDKAIELTIVGPEAPLVIGVVDAFRAAGLPIFGPTQGAAQLEGSKAFTKDFLARHNIPTAAYANFTEIEPALAYVREKGAPIVVKADGLAAGKGVIVAMTLQEAEDAIQDMLAGNAFGSAGSRVVVEEFLDGEEASFIVMVDGENVLPMATSQDHKRVGDADTGPNTGGMGAYSPAPVVTQDVHDRVMREVIDPTVRGMAAEGNTYTGFLYAGLMIDSTGAPKVIEYNCRFGDPETQPIMMRLQSDLVELCQAAIAGKLDQVESKWDPRASIGVVLAAGGYPGDYAKGEVISGLPTQESAGQKVFHAGTETQGDQVVTNGGRVLCATALGNTVLEAQQRAYQLADQIHWNGMFCRRDIGYRAIAREQAK.

In terms of domain architecture, ATP-grasp spans 109-316 (KDFLARHNIP…LVELCQAAIA (208 aa)). 135–196 (VREKGAPIVV…EEFLDGEEAS (62 aa)) serves as a coordination point for ATP. Mg(2+) is bound by residues Glu-286 and Asn-288.

The protein belongs to the GARS family. Requires Mg(2+) as cofactor. Mn(2+) is required as a cofactor.

The catalysed reaction is 5-phospho-beta-D-ribosylamine + glycine + ATP = N(1)-(5-phospho-beta-D-ribosyl)glycinamide + ADP + phosphate + H(+). Its pathway is purine metabolism; IMP biosynthesis via de novo pathway; N(1)-(5-phospho-D-ribosyl)glycinamide from 5-phospho-alpha-D-ribose 1-diphosphate: step 2/2. This chain is Phosphoribosylamine--glycine ligase, found in Vibrio cholerae serotype O1 (strain ATCC 39315 / El Tor Inaba N16961).